The primary structure comprises 347 residues: Protein RecA (347 aa).

65-72 (GPESSGKT) contacts ATP. Positions 327–336 (KFEPTELSRE) are enriched in basic and acidic residues. Residues 327 to 347 (KFEPTELSREEGDEDTLEDAM) are disordered. Residues 337–347 (EGDEDTLEDAM) are compositionally biased toward acidic residues.

This sequence belongs to the RecA family.

It is found in the cytoplasm. Functionally, can catalyze the hydrolysis of ATP in the presence of single-stranded DNA, the ATP-dependent uptake of single-stranded DNA by duplex DNA, and the ATP-dependent hybridization of homologous single-stranded DNAs. It interacts with LexA causing its activation and leading to its autocatalytic cleavage. The chain is Protein RecA from Xylella fastidiosa (strain M12).